The following is a 265-amino-acid chain: Catechol O-methyltransferase (265 aa).

Residues 1-2 (ML) are Cytoplasmic-facing. Residues 3-19 (LAAVSLGLLLLAFLLLL) traverse the membrane as a helical; Signal-anchor for type II membrane protein segment. Residues 20–265 (RHLGWGLVAI…QGPGSSPVKS (246 aa)) lie on the Extracellular side of the membrane. Residues V85, E107, S115, E133, I134, 160–163 (GASQ), S162, and D184 each bind S-adenosyl-L-methionine. Mg(2+) is bound at residue D184. Residue K187 coordinates substrate. 2 residues coordinate Mg(2+): D212 and N213. N213 and E242 together coordinate substrate. A phosphoserine mark is found at S260, S261, and S265.

The protein belongs to the class I-like SAM-binding methyltransferase superfamily. Cation-dependent O-methyltransferase family. It depends on Mg(2+) as a cofactor.

It is found in the cytoplasm. It localises to the cell membrane. It catalyses the reaction a catechol + S-adenosyl-L-methionine = a guaiacol + S-adenosyl-L-homocysteine + H(+). The enzyme catalyses 2-hydroxyestrone + S-adenosyl-L-methionine = 2-hydroxy-3-methoxy-estrone + S-adenosyl-L-homocysteine + H(+). It carries out the reaction 4-hydroxyestrone + S-adenosyl-L-methionine = 4-methoxyestrone + S-adenosyl-L-homocysteine + H(+). The catalysed reaction is 2-hydroxyestrone + S-adenosyl-L-methionine = 2-methoxyestrone + S-adenosyl-L-homocysteine + H(+). It catalyses the reaction 4-hydroxy-17beta-estradiol + S-adenosyl-L-methionine = 4-methoxy-17beta-estradiol + S-adenosyl-L-homocysteine + H(+). The enzyme catalyses 2-hydroxy-17beta-estradiol + S-adenosyl-L-methionine = 2-hydroxy-3-methoxy-17beta-estradiol + S-adenosyl-L-homocysteine + H(+). It carries out the reaction 2-hydroxy-17beta-estradiol + S-adenosyl-L-methionine = 2-methoxy-17beta-estradiol + S-adenosyl-L-homocysteine + H(+). Functionally, catalyzes the O-methylation, and thereby the inactivation, of catecholamine neurotransmitters and catechol hormones. Also shortens the biological half-lives of certain neuroactive drugs, like L-DOPA, alpha-methyl DOPA and isoproterenol. This is Catechol O-methyltransferase from Mus musculus (Mouse).